We begin with the raw amino-acid sequence, 823 residues long: Transcription factor SPT20 homolog-like 1 (823 aa).

Disordered stretches follow at residues 246–273 (SVKP…KEER), 369–524 (PRKK…AAQP), 560–601 (GSSF…AVQA), 631–669 (VLTG…LGLS), and 720–757 (LRQQ…PQHI). A compositionally biased stretch (polar residues) spans 423 to 440 (SHSSSGPASVSQLSSWKT). Low complexity-rich tracts occupy residues 469 to 509 (SSSG…QKPS), 568 to 582 (APGS…ISGS), and 636 to 650 (QQQS…QLQQ).

This sequence belongs to the SPT20 family.

The protein is Transcription factor SPT20 homolog-like 1 (SUPT20HL1) of Homo sapiens (Human).